Consider the following 100-residue polypeptide: NADH-quinone oxidoreductase subunit K 1 (100 aa).

The next 3 membrane-spanning stretches (helical) occupy residues 3–23, 28–48, and 60–80; these read IIKA…LGVI, LITV…ALVA, and IFAF…LGLI.

This sequence belongs to the complex I subunit 4L family. In terms of assembly, NDH-1 is composed of 14 different subunits. Subunits NuoA, H, J, K, L, M, N constitute the membrane sector of the complex.

It is found in the cell inner membrane. The enzyme catalyses a quinone + NADH + 5 H(+)(in) = a quinol + NAD(+) + 4 H(+)(out). Functionally, NDH-1 shuttles electrons from NADH, via FMN and iron-sulfur (Fe-S) centers, to quinones in the respiratory chain. The immediate electron acceptor for the enzyme in this species is believed to be ubiquinone. Couples the redox reaction to proton translocation (for every two electrons transferred, four hydrogen ions are translocated across the cytoplasmic membrane), and thus conserves the redox energy in a proton gradient. The polypeptide is NADH-quinone oxidoreductase subunit K 1 (Aquifex aeolicus (strain VF5)).